Here is a 334-residue protein sequence, read N- to C-terminus: Glycerol-3-phosphate dehydrogenase [NAD(P)+] (334 aa).

The NADPH site is built by Tyr-14 and Lys-108. 3 residues coordinate sn-glycerol 3-phosphate: Lys-108, Gly-140, and Ser-142. Ala-144 provides a ligand contact to NADPH. Sn-glycerol 3-phosphate is bound by residues Lys-195, Asp-248, Ser-258, Arg-259, and Asn-260. Lys-195 serves as the catalytic Proton acceptor. Arg-259 serves as a coordination point for NADPH. Glu-285 contacts NADPH.

Belongs to the NAD-dependent glycerol-3-phosphate dehydrogenase family.

It localises to the cytoplasm. The enzyme catalyses sn-glycerol 3-phosphate + NAD(+) = dihydroxyacetone phosphate + NADH + H(+). It catalyses the reaction sn-glycerol 3-phosphate + NADP(+) = dihydroxyacetone phosphate + NADPH + H(+). The protein operates within membrane lipid metabolism; glycerophospholipid metabolism. Functionally, catalyzes the reduction of the glycolytic intermediate dihydroxyacetone phosphate (DHAP) to sn-glycerol 3-phosphate (G3P), the key precursor for phospholipid synthesis. This chain is Glycerol-3-phosphate dehydrogenase [NAD(P)+], found in Mesoplasma florum (strain ATCC 33453 / NBRC 100688 / NCTC 11704 / L1) (Acholeplasma florum).